We begin with the raw amino-acid sequence, 669 residues long: Beta-galactosidase (669 aa).

The signal sequence occupies residues 1-24 (MDFPGAARLLSLLLVPLLLGPARG). A propeptide spanning residues 25-29 (LRNAS) is cleaved from the precursor. An N-linked (GlcNAc...) asparagine glycan is attached at Asn-27. Residues Tyr-84, Glu-130, and Asn-188 each coordinate substrate. Residue Glu-189 is the Proton donor of the active site. An intrachain disulfide couples Cys-196 to Cys-231. N-linked (GlcNAc...) asparagine glycosylation is present at Asn-248. Residue Glu-269 is the Nucleophile of the active site. Residue Tyr-334 participates in substrate binding. Asn-465, Asn-499, Asn-547, and Asn-557 each carry an N-linked (GlcNAc...) asparagine glycan. A disulfide bridge links Cys-628 with Cys-636. The interval 649-669 (TPTSSHPLPDLSDRDSGWDRV) is disordered. Positions 659 to 669 (LSDRDSGWDRV) are enriched in basic and acidic residues.

It belongs to the glycosyl hydrolase 35 family. Homodimer. May form higher multimers.

Its subcellular location is the lysosome. The catalysed reaction is Hydrolysis of terminal non-reducing beta-D-galactose residues in beta-D-galactosides.. Functionally, cleaves beta-linked terminal galactosyl residues from gangliosides, glycoproteins, and glycosaminoglycans. The chain is Beta-galactosidase (GLB1) from Felis catus (Cat).